Reading from the N-terminus, the 571-residue chain is Proline--tRNA ligase (571 aa).

The protein belongs to the class-II aminoacyl-tRNA synthetase family. ProS type 1 subfamily. As to quaternary structure, homodimer.

It localises to the cytoplasm. The enzyme catalyses tRNA(Pro) + L-proline + ATP = L-prolyl-tRNA(Pro) + AMP + diphosphate. In terms of biological role, catalyzes the attachment of proline to tRNA(Pro) in a two-step reaction: proline is first activated by ATP to form Pro-AMP and then transferred to the acceptor end of tRNA(Pro). As ProRS can inadvertently accommodate and process non-cognate amino acids such as alanine and cysteine, to avoid such errors it has two additional distinct editing activities against alanine. One activity is designated as 'pretransfer' editing and involves the tRNA(Pro)-independent hydrolysis of activated Ala-AMP. The other activity is designated 'posttransfer' editing and involves deacylation of mischarged Ala-tRNA(Pro). The misacylated Cys-tRNA(Pro) is not edited by ProRS. This Psychromonas ingrahamii (strain DSM 17664 / CCUG 51855 / 37) protein is Proline--tRNA ligase.